A 79-amino-acid chain; its full sequence is Putative defensin-like protein 80 (79 aa).

A signal peptide spans 1–26 (MDVQRSSYIFIALSIIAMFLITGVKP). 4 disulfide bridges follow: cysteine 32/cysteine 65, cysteine 36/cysteine 58, cysteine 44/cysteine 63, and cysteine 48/cysteine 64.

This sequence belongs to the DEFL family.

It localises to the secreted. The protein is Putative defensin-like protein 80 (LCR81) of Arabidopsis thaliana (Mouse-ear cress).